The chain runs to 37 residues: MDKFLSSAPVLLTAMMVFTAGLLIEFNRFFPDLLFHP.

Residues 4–24 form a helical membrane-spanning segment; that stretch reads FLSSAPVLLTAMMVFTAGLLI.

This sequence belongs to the PsaJ family.

It localises to the cellular thylakoid membrane. Functionally, may help in the organization of the PsaE and PsaF subunits. In Picosynechococcus sp. (strain ATCC 27264 / PCC 7002 / PR-6) (Agmenellum quadruplicatum), this protein is Photosystem I reaction center subunit IX.